A 234-amino-acid polypeptide reads, in one-letter code: GTP-binding protein ypt4 (234 aa).

Position 16–23 (16–23) interacts with GTP; that stretch reads GPSGTGKS. The Effector region motif lies at 39–47; that stretch reads SHTVGIDFA. Residue 68 to 72 participates in GTP binding; the sequence is DTAGQ. Residues Cys233 and Cys234 are each lipidated (S-geranylgeranyl cysteine).

The protein belongs to the small GTPase superfamily. Rab family.

Its subcellular location is the cell membrane. This is GTP-binding protein ypt4 (ypt4) from Schizosaccharomyces pombe (strain 972 / ATCC 24843) (Fission yeast).